The chain runs to 393 residues: 5-amino-6-(D-ribitylamino)uracil--L-tyrosine 4-hydroxyphenyl transferase (393 aa).

One can recognise a Radical SAM core domain in the interval 67–322 (VTYVINRNIN…GQWIVNHQPS (256 aa)). [4Fe-4S] cluster-binding residues include Cys-81, Cys-85, and Cys-88.

Belongs to the radical SAM superfamily. CofH family. In terms of assembly, consists of two subunits, CofG and CofH. [4Fe-4S] cluster serves as cofactor.

The enzyme catalyses 5-amino-6-(D-ribitylamino)uracil + L-tyrosine + S-adenosyl-L-methionine = 5-amino-5-(4-hydroxybenzyl)-6-(D-ribitylimino)-5,6-dihydrouracil + 2-iminoacetate + 5'-deoxyadenosine + L-methionine + H(+). Its pathway is cofactor biosynthesis; coenzyme F0 biosynthesis. In terms of biological role, catalyzes the radical-mediated synthesis of 5-amino-5-(4-hydroxybenzyl)-6-(D-ribitylimino)-5,6-dihydrouracil from 5-amino-6-(D-ribitylamino)uracil and L-tyrosine. This is 5-amino-6-(D-ribitylamino)uracil--L-tyrosine 4-hydroxyphenyl transferase from Thermosynechococcus vestitus (strain NIES-2133 / IAM M-273 / BP-1).